We begin with the raw amino-acid sequence, 329 residues long: Tryptophan--tRNA ligase (329 aa).

Residues 9–11 and 17–18 each bind ATP; these read QPS and GN. Residues 10 to 18 carry the 'HIGH' region motif; that stretch reads PSGIPTIGN. Residue Asp-133 participates in L-tryptophan binding. ATP contacts are provided by residues 145 to 147, Val-184, and 193 to 197; these read GDD and KMSKS. Residues 193–197 carry the 'KMSKS' region motif; the sequence is KMSKS.

This sequence belongs to the class-I aminoacyl-tRNA synthetase family. In terms of assembly, homodimer.

Its subcellular location is the cytoplasm. The catalysed reaction is tRNA(Trp) + L-tryptophan + ATP = L-tryptophyl-tRNA(Trp) + AMP + diphosphate + H(+). Functionally, catalyzes the attachment of tryptophan to tRNA(Trp). The protein is Tryptophan--tRNA ligase of Staphylococcus epidermidis (strain ATCC 35984 / DSM 28319 / BCRC 17069 / CCUG 31568 / BM 3577 / RP62A).